A 553-amino-acid chain; its full sequence is Formate--tetrahydrofolate ligase (553 aa).

62–69 (TPAGEGKS) is a binding site for ATP.

Belongs to the formate--tetrahydrofolate ligase family.

The catalysed reaction is (6S)-5,6,7,8-tetrahydrofolate + formate + ATP = (6R)-10-formyltetrahydrofolate + ADP + phosphate. It participates in one-carbon metabolism; tetrahydrofolate interconversion. The sequence is that of Formate--tetrahydrofolate ligase from Limosilactobacillus reuteri subsp. reuteri (strain JCM 1112) (Lactobacillus reuteri).